The chain runs to 145 residues: Copper transporter 4 (145 aa).

A run of 2 helical transmembrane segments spans residues 53–73 (GMYALALIFVFFLAFLAEWLA) and 106–126 (YLVILAVVSFNGGVFLAAIFG).

Belongs to the copper transporter (Ctr) (TC 1.A.56) family. SLC31A subfamily. Highly expressed in roots and at lower levels in leaves, stems and flowers.

It localises to the membrane. Functionally, involved in the transport of copper. This Arabidopsis thaliana (Mouse-ear cress) protein is Copper transporter 4 (COPT4).